The primary structure comprises 457 residues: Serine/threonine-protein phosphatase 2A activator 2 (457 aa).

2 disordered regions span residues 387–407 (DAHG…GEGQ) and 426–457 (AEQE…IPFD). The span at 391 to 400 (HIHPAGKPHA) shows a compositional bias: basic residues.

Belongs to the PTPA-type PPIase family.

Its subcellular location is the cytoplasm. The catalysed reaction is [protein]-peptidylproline (omega=180) = [protein]-peptidylproline (omega=0). In terms of biological role, PPIases accelerate the folding of proteins. It catalyzes the cis-trans isomerization of proline imidic peptide bonds in oligopeptides. Acts as a regulatory subunit for PP2A-like phosphatases modulating their activity or substrate specificity, probably by inducing a conformational change in the catalytic subunit, a direct target of the PPIase. Can reactivate inactive phosphatase PP2A-phosphatase methylesterase complexes (PP2Ai) in presence of ATP and Mg(2+) by dissociating the inactive form from the complex. This chain is Serine/threonine-protein phosphatase 2A activator 2 (RRD2), found in Mycosarcoma maydis (Corn smut fungus).